Here is a 398-residue protein sequence, read N- to C-terminus: Succinate--CoA ligase [ADP-forming] subunit beta (398 aa).

The ATP-grasp domain occupies 9-253 (KEILNSFGVR…VREENATEVE (245 aa)). Residues lysine 50, 57–59 (GRG), valine 106, and glutamate 116 contribute to the ATP site. Mg(2+)-binding residues include asparagine 208 and aspartate 222. Substrate contacts are provided by residues asparagine 273 and 330-332 (GIV).

The protein belongs to the succinate/malate CoA ligase beta subunit family. In terms of assembly, heterotetramer of two alpha and two beta subunits. Requires Mg(2+) as cofactor.

It carries out the reaction succinate + ATP + CoA = succinyl-CoA + ADP + phosphate. It catalyses the reaction GTP + succinate + CoA = succinyl-CoA + GDP + phosphate. The protein operates within carbohydrate metabolism; tricarboxylic acid cycle; succinate from succinyl-CoA (ligase route): step 1/1. In terms of biological role, succinyl-CoA synthetase functions in the citric acid cycle (TCA), coupling the hydrolysis of succinyl-CoA to the synthesis of either ATP or GTP and thus represents the only step of substrate-level phosphorylation in the TCA. The beta subunit provides nucleotide specificity of the enzyme and binds the substrate succinate, while the binding sites for coenzyme A and phosphate are found in the alpha subunit. This chain is Succinate--CoA ligase [ADP-forming] subunit beta, found in Christiangramia forsetii (strain DSM 17595 / CGMCC 1.15422 / KT0803) (Gramella forsetii).